Here is a 328-residue protein sequence, read N- to C-terminus: Cell division protein ZipA (328 aa).

At 1 to 6 (MMQDLR) the chain is on the periplasmic side. The chain crosses the membrane as a helical span at residues 7–27 (LILIVVGAIAIIALLLHGLWT). Over 28-328 (SRKERSSLFR…REVLDANTIA (301 aa)) the chain is Cytoplasmic. The segment covering 61 to 72 (GEVRVRTSHPQE) has biased composition (basic and acidic residues). Residues 61–183 (GEVRVRTSHP…EPVAPAPEAK (123 aa)) form a disordered region. Composition is skewed to polar residues over residues 95–104 (KSAQVKTASR) and 164–174 (APQQHVESQQE).

It belongs to the ZipA family. Interacts with FtsZ via their C-terminal domains.

The protein resides in the cell inner membrane. Functionally, essential cell division protein that stabilizes the FtsZ protofilaments by cross-linking them and that serves as a cytoplasmic membrane anchor for the Z ring. Also required for the recruitment to the septal ring of downstream cell division proteins. In Yersinia pestis bv. Antiqua (strain Antiqua), this protein is Cell division protein ZipA.